A 349-amino-acid polypeptide reads, in one-letter code: Ethyl acetate hydrolase (349 aa).

An AB hydrolase-1 domain is found at 67-300; that stretch reads YIGEGRALDP…SHDQFFTVDD (234 aa). Ser-139 (nucleophile) is an active-site residue. Residues Asp-293 and His-322 contribute to the active site.

This sequence belongs to the AB hydrolase superfamily. Acetyl esterase family. Homodimer.

It catalyses the reaction ethyl acetate + H2O = ethanol + acetate + H(+). In terms of biological role, esterase that catalyzes the hydrolysis of ethyl acetate. Involved in the degradation of short chain methyl ketones (MEK) such as 2-butanone and 2-hexanone. In vitro, can also hydrolyze vinyl acetate, 4-nitrophenyl acetate, methyl acetate, propyl acetate, benzyl acetate and methyl propionate. The highest activities are obtained with acetic acid esters, but the alcohol group also plays an important role, as compounds with two carbon atoms in the alcohol moiety, i.e., vinyl and ethyl acetate, are by far the preferred substrates. This Pseudomonas veronii protein is Ethyl acetate hydrolase.